Here is a 318-residue protein sequence, read N- to C-terminus: MIDRIPVPFLNPLFKFLFNREWDGPSTFSILMMIGFLTASYLLPKELKRRKLEPEHSDWLLLLGILGTLVGAKIFFVFEIWDQIFVETPGFDGKYIYPLTHWYGFPGRMSLWDNLFSGSGLVFYGGFLFGILFITLYMKYFQLDIASYLDAAVPSMAIGYAIGRLGCWVSGDGCYGFATNVEIPLLVFNYHGAHPSGVPVWNTPLIESIISFLFFFYFQFWARNQNFKKFSIGAQYLVLHGFARLLVEFLRVNKAVFPLMDPPAFVNIPNAEQNPEFLTQYYWHGFSQSQLVSIIIILVGAFFILKWKLWKKENTSNI.

3 consecutive transmembrane segments (helical) span residues 24-44, 60-80, and 115-135; these read GPST…YLLP, LLLL…VFEI, and LFSG…LFIT. A 1,2-diacyl-sn-glycero-3-phospho-(1'-sn-glycerol) is bound at residue Arg164. The next 2 helical transmembrane spans lie at 198–218 and 285–305; these read VPVW…FFYF and GFSQ…FFIL.

The protein belongs to the Lgt family.

It localises to the cell inner membrane. It catalyses the reaction L-cysteinyl-[prolipoprotein] + a 1,2-diacyl-sn-glycero-3-phospho-(1'-sn-glycerol) = an S-1,2-diacyl-sn-glyceryl-L-cysteinyl-[prolipoprotein] + sn-glycerol 1-phosphate + H(+). The protein operates within protein modification; lipoprotein biosynthesis (diacylglyceryl transfer). Catalyzes the transfer of the diacylglyceryl group from phosphatidylglycerol to the sulfhydryl group of the N-terminal cysteine of a prolipoprotein, the first step in the formation of mature lipoproteins. The sequence is that of Phosphatidylglycerol--prolipoprotein diacylglyceryl transferase from Leptospira interrogans serogroup Icterohaemorrhagiae serovar copenhageni (strain Fiocruz L1-130).